The sequence spans 105 residues: UPF0060 membrane protein Ajs_1326 (105 aa).

Transmembrane regions (helical) follow at residues 4–24, 30–50, 60–80, and 82–102; these read FALFIATALAEIVGCYLPYLW, SAWLLVPAAASLALFAWLLTL, AAYGGVYIGVALLWLWIVDGI, and PTAWDVAGVAVALTGMGLIMF.

Belongs to the UPF0060 family.

It localises to the cell inner membrane. This is UPF0060 membrane protein Ajs_1326 from Acidovorax sp. (strain JS42).